The chain runs to 267 residues: Thymidylate synthase (267 aa).

DUMP is bound at residue arginine 25. Histidine 55 serves as a coordination point for (6R)-5,10-methylene-5,6,7,8-tetrahydrofolate. 130–131 (RR) is a dUMP binding site. Cysteine 150 acts as the Nucleophile in catalysis. Residues 170 to 173 (RSAD), asparagine 181, and 211 to 213 (HIY) contribute to the dUMP site. Aspartate 173 serves as a coordination point for (6R)-5,10-methylene-5,6,7,8-tetrahydrofolate. Residue alanine 266 coordinates (6R)-5,10-methylene-5,6,7,8-tetrahydrofolate.

The protein belongs to the thymidylate synthase family. Bacterial-type ThyA subfamily. In terms of assembly, homodimer.

The protein resides in the cytoplasm. The enzyme catalyses dUMP + (6R)-5,10-methylene-5,6,7,8-tetrahydrofolate = 7,8-dihydrofolate + dTMP. Its pathway is pyrimidine metabolism; dTTP biosynthesis. In terms of biological role, catalyzes the reductive methylation of 2'-deoxyuridine-5'-monophosphate (dUMP) to 2'-deoxythymidine-5'-monophosphate (dTMP) while utilizing 5,10-methylenetetrahydrofolate (mTHF) as the methyl donor and reductant in the reaction, yielding dihydrofolate (DHF) as a by-product. This enzymatic reaction provides an intracellular de novo source of dTMP, an essential precursor for DNA biosynthesis. This Corynebacterium efficiens (strain DSM 44549 / YS-314 / AJ 12310 / JCM 11189 / NBRC 100395) protein is Thymidylate synthase.